The primary structure comprises 253 residues: MSLVCSVIFIHHAFNANILYKDYAFSDGEILMVDNAVRTHFEPYERHFKEIGFNENTIKKYLQCTNIQTVTVPVPAKFLRASNVPTGLLNEMIAYLNSEERNHHNFSELLLFSCLSIFAACKGFITLLTNGVLSVSGKVRNIVNMKLAHPWKLKDICDCLYISESLLKKKLKQEQTTFSQILLDARMQHAKNLIRVEGSVNKIAEQCGYASTSYFIYAFRKHFGNSPKRVSKEYRCQRRTGMNTDNTMNALAI.

In terms of domain architecture, HTH araC/xylS-type spans 137 to 233; sequence GKVRNIVNMK…GNSPKRVSKE (97 aa). DNA-binding regions (H-T-H motif) lie at residues 154-175 and 200-223; these read KDIC…KQEQ and VNKI…RKHF.

Induces the expression of gadE and mdtEF. Could also regulate the expression of other genes involved in acid resistance. This Escherichia coli O6:H1 (strain CFT073 / ATCC 700928 / UPEC) protein is HTH-type transcriptional regulator YdeO (ydeO).